Consider the following 487-residue polypeptide: L-tartrate/succinate antiporter (487 aa).

The next 14 membrane-spanning stretches (helical) occupy residues 10 to 30 (YLAPLAVIAIIALIPVPAGLE), 33 to 53 (TWLYFAVFTGVIVGLILEPVP), 54 to 74 (GAVVAMVGISIIAILSPWLLF), 93 to 113 (WAVSGFSNSVIWLIFAAFMFG), 137 to 157 (TLFLGYAVMFSELILAPVTPS), 189 to 209 (IGSYIMWMGIVADCVTSAIFL), 236 to 256 (FLGMLPLSILLVLLVPWLAYV), 292 to 312 (LIVGALVLWIFGGDYIDAAMV), 313 to 333 (GYSVVALMLLLRIISWDDIVS), 340 to 360 (VFFWLASLITLATGLNNTGFI), 370 to 390 (SLSGYSPTMVMVALIVVFYLL), 393 to 413 (FFASATAYTSALAPMMIAAAL), 418 to 438 (IPLPVFCLMVGAAIGLGSILT), and 465 to 485 (IFGLIFLVLLVITGLLWMPVV).

It belongs to the SLC13A/DASS transporter (TC 2.A.47) family. DIT1 subfamily.

It is found in the cell inner membrane. The catalysed reaction is (2R,3R)-tartrate(out) + succinate(in) = (2R,3R)-tartrate(in) + succinate(out). Its function is as follows. Catalyzes the uptake of tartrate in exchange for intracellular succinate. Essential for anaerobic L-tartrate fermentation. The sequence is that of L-tartrate/succinate antiporter (ttdT) from Shigella sonnei (strain Ss046).